Reading from the N-terminus, the 155-residue chain is Protein-export protein SecB (155 aa).

This sequence belongs to the SecB family. Homotetramer, a dimer of dimers. One homotetramer interacts with 1 SecA dimer.

Its subcellular location is the cytoplasm. Its function is as follows. One of the proteins required for the normal export of preproteins out of the cell cytoplasm. It is a molecular chaperone that binds to a subset of precursor proteins, maintaining them in a translocation-competent state. It also specifically binds to its receptor SecA. The sequence is that of Protein-export protein SecB from Methylococcus capsulatus (strain ATCC 33009 / NCIMB 11132 / Bath).